Consider the following 285-residue polypeptide: 1,4-dihydroxy-2-naphthoyl-CoA synthase (285 aa).

Substrate-binding positions include arginine 45, 84–88 (AGGDQ), tyrosine 97, 129–133 (YSIGG), threonine 155, serine 161, tyrosine 258, and lysine 273. 154–156 (QTG) is a binding site for hydrogencarbonate.

Belongs to the enoyl-CoA hydratase/isomerase family. MenB subfamily. As to quaternary structure, homohexamer. Hydrogencarbonate is required as a cofactor.

It catalyses the reaction 2-succinylbenzoyl-CoA + H(+) = 1,4-dihydroxy-2-naphthoyl-CoA + H2O. The protein operates within quinol/quinone metabolism; 1,4-dihydroxy-2-naphthoate biosynthesis; 1,4-dihydroxy-2-naphthoate from chorismate: step 6/7. It functions in the pathway quinol/quinone metabolism; menaquinone biosynthesis. Its function is as follows. Converts o-succinylbenzoyl-CoA (OSB-CoA) to 1,4-dihydroxy-2-naphthoyl-CoA (DHNA-CoA). This is 1,4-dihydroxy-2-naphthoyl-CoA synthase from Salmonella typhimurium (strain LT2 / SGSC1412 / ATCC 700720).